A 535-amino-acid polypeptide reads, in one-letter code: Light-independent protochlorophyllide reductase subunit B (535 aa).

D36 is a [4Fe-4S] cluster binding site. D287 acts as the Proton donor in catalysis. 422–423 (GL) provides a ligand contact to substrate.

Belongs to the ChlB/BchB/BchZ family. In terms of assembly, protochlorophyllide reductase is composed of three subunits; BchL, BchN and BchB. Forms a heterotetramer of two BchB and two BchN subunits. [4Fe-4S] cluster is required as a cofactor.

The enzyme catalyses chlorophyllide a + oxidized 2[4Fe-4S]-[ferredoxin] + 2 ADP + 2 phosphate = protochlorophyllide a + reduced 2[4Fe-4S]-[ferredoxin] + 2 ATP + 2 H2O. It participates in porphyrin-containing compound metabolism; bacteriochlorophyll biosynthesis (light-independent). Component of the dark-operative protochlorophyllide reductase (DPOR) that uses Mg-ATP and reduced ferredoxin to reduce ring D of protochlorophyllide (Pchlide) to form chlorophyllide a (Chlide). This reaction is light-independent. The NB-protein (BchN-BchB) is the catalytic component of the complex. This Rhodopseudomonas palustris (strain BisB5) protein is Light-independent protochlorophyllide reductase subunit B.